Consider the following 303-residue polypeptide: MTIKDWYKLTFLIESDSEEIIIWKLNELGIFSFSFEYLIKNKNKKEVNIWLPVADWSESSRFGVEKIITKLLNINAPTNQFFDWSIIKEEDWLTSWKKYWAPELVGNHFLILPCWINLNEKFKDKKIIKIDPGAAFGTGSHPSTYLCLEKMDNILFSDKKILDIGSGSGILSVAARLLGAKEVCAVDNDYLAINATKSNFQLNFGNLNNLNTYLGSFNEVILKNQLKQFDFVLCNILAEVIKEMIPNIYKCLRNNGEVIFSGILNSQKDEIIKILIQNDLKLLDVSTRKDWACISAQKASDPT.

S-adenosyl-L-methionine-binding residues include Thr144, Gly165, Asp187, and Asn235.

The protein belongs to the methyltransferase superfamily. PrmA family.

Its subcellular location is the cytoplasm. The catalysed reaction is L-lysyl-[protein] + 3 S-adenosyl-L-methionine = N(6),N(6),N(6)-trimethyl-L-lysyl-[protein] + 3 S-adenosyl-L-homocysteine + 3 H(+). Methylates ribosomal protein L11. The sequence is that of Ribosomal protein L11 methyltransferase from Prochlorococcus marinus (strain AS9601).